We begin with the raw amino-acid sequence, 340 residues long: tRNA dimethylallyltransferase (340 aa).

Residues 1 to 25 are disordered; sequence MDQNRSPNGRDCREPPSPSSTARPG. ATP is bound at residue 31 to 38; it reads GPTATGKS. Substrate is bound at residue 33–38; the sequence is TATGKS. An interaction with substrate tRNA region spans residues 56 to 59; sequence DSRQ.

It belongs to the IPP transferase family. As to quaternary structure, monomer. Mg(2+) serves as cofactor.

The enzyme catalyses adenosine(37) in tRNA + dimethylallyl diphosphate = N(6)-dimethylallyladenosine(37) in tRNA + diphosphate. In terms of biological role, catalyzes the transfer of a dimethylallyl group onto the adenine at position 37 in tRNAs that read codons beginning with uridine, leading to the formation of N6-(dimethylallyl)adenosine (i(6)A). This chain is tRNA dimethylallyltransferase, found in Synechococcus sp. (strain JA-3-3Ab) (Cyanobacteria bacterium Yellowstone A-Prime).